The primary structure comprises 78 residues: Metallothionein-like protein type 2 (78 aa).

Belongs to the metallothionein superfamily. Type 15 family.

Its function is as follows. Metallothioneins have a high content of cysteine residues that bind various heavy metals. This chain is Metallothionein-like protein type 2, found in Actinidia deliciosa (Kiwi).